The sequence spans 98 residues: Large ribosomal subunit protein uL23 (98 aa).

Belongs to the universal ribosomal protein uL23 family. In terms of assembly, part of the 50S ribosomal subunit. Contacts protein L29, and trigger factor when it is bound to the ribosome.

In terms of biological role, one of the early assembly proteins it binds 23S rRNA. One of the proteins that surrounds the polypeptide exit tunnel on the outside of the ribosome. Forms the main docking site for trigger factor binding to the ribosome. This Nitrobacter hamburgensis (strain DSM 10229 / NCIMB 13809 / X14) protein is Large ribosomal subunit protein uL23.